The sequence spans 167 residues: UPF0179 protein Pars_2336 (167 aa).

It belongs to the UPF0179 family.

The protein is UPF0179 protein Pars_2336 of Pyrobaculum arsenaticum (strain DSM 13514 / JCM 11321 / PZ6).